A 326-amino-acid polypeptide reads, in one-letter code: Peroxidase 41 (326 aa).

Positions 1–20 (MSSVINVLFVVLVFVPSIYS) are cleaved as a signal peptide. Asn-25 carries an N-linked (GlcNAc...) asparagine glycan. Intrachain disulfides connect Cys-35–Cys-116, Cys-68–Cys-73, Cys-122–Cys-318, and Cys-201–Cys-228. His-66 functions as the Proton acceptor in the catalytic mechanism. Residues Asp-67, Gly-72, Asp-74, and Ser-76 each coordinate Ca(2+). Pro-164 serves as a coordination point for substrate. Asn-167 carries N-linked (GlcNAc...) asparagine glycosylation. His-194 contacts heme b. Thr-195 contributes to the Ca(2+) binding site. N-linked (GlcNAc...) asparagine glycosylation occurs at Asn-234. Ca(2+)-binding residues include Asp-242, Thr-245, and Asp-250. The N-linked (GlcNAc...) asparagine glycan is linked to Asn-286.

The protein belongs to the peroxidase family. Classical plant (class III) peroxidase subfamily. Heme b serves as cofactor. The cofactor is Ca(2+).

The protein resides in the secreted. It catalyses the reaction 2 a phenolic donor + H2O2 = 2 a phenolic radical donor + 2 H2O. In terms of biological role, removal of H(2)O(2), oxidation of toxic reductants, biosynthesis and degradation of lignin, suberization, auxin catabolism, response to environmental stresses such as wounding, pathogen attack and oxidative stress. These functions might be dependent on each isozyme/isoform in each plant tissue. This is Peroxidase 41 (PER41) from Arabidopsis thaliana (Mouse-ear cress).